The following is a 469-amino-acid chain: Cytosolic beta-glucosidase (469 aa).

Residues Gln-17, His-120, and Asn-164 each contribute to the substrate site. The active-site Proton donor is Glu-165. Tyr-309 is a binding site for substrate. Glu-373 functions as the Nucleophile in the catalytic mechanism. Substrate-binding positions include Trp-417 and 424–425 (EW).

This sequence belongs to the glycosyl hydrolase 1 family. Klotho subfamily. May interact with NEU2. The N-terminus is blocked. Present in small intestine (at protein level). Expressed in liver, small intestine, colon, spleen and kidney. Down-regulated in renal cell carcinomas and hepatocellular carcinomas.

It is found in the cytoplasm. It localises to the cytosol. It catalyses the reaction Hydrolysis of terminal, non-reducing beta-D-glucosyl residues with release of beta-D-glucose.. It carries out the reaction a beta-D-glucosyl-(1&lt;-&gt;1')-N-acylsphing-4-enine + H2O = an N-acylsphing-4-enine + D-glucose. The enzyme catalyses a beta-D-galactosyl-(1&lt;-&gt;1')-N-acylsphing-4-enine + H2O = an N-acylsphing-4-enine + D-galactose. The catalysed reaction is beta-D-glucosyl-(1&lt;-&gt;1)-sphing-4-enine + H2O = sphing-4-enine + D-glucose. It catalyses the reaction beta-D-glucosyl-(1&lt;-&gt;1)-N-octadecanoylsphing-4-enine + H2O = N-octadecanoylsphing-4-enine + D-glucose. It carries out the reaction beta-D-galactosyl-(1&lt;-&gt;1)-sphing-4-enine + H2O = sphing-4-enine + D-galactose. The enzyme catalyses beta-D-galactosyl-(1&lt;-&gt;1')-N-octadecanoylsphing-4-enine + H2O = N-octadecanoylsphing-4-enine + D-galactose. The catalysed reaction is a beta-D-xylosyl-(1&lt;-&gt;1')-N-acylsphing-4-enine + cholesterol = cholesteryl 3-beta-D-xyloside + an N-acylsphing-4-enine. Its activity is regulated as follows. Inhibited by 2,4-dinitrophenyl-2-fluoro-2-deoxy-beta-D-glucopyranoside. Inhibited by sodium taurocholate. Inhibited by alpha-1-C-nonyl-DIX/AnDIX. The glucosylceramidase activity is slightly inhibited by conduritol B epoxide/CBE while the galactosylceramidase activity is not. Functionally, neutral cytosolic beta-glycosidase with a broad substrate specificity that could play a role in the catabolism of glycosylceramides. Has a significant glucosylceramidase activity in vitro. However, that activity is relatively low and its significance in vivo is not clear. Hydrolyzes galactosylceramides/GalCers, glucosylsphingosines/GlcSphs and galactosylsphingosines/GalSphs. However, the in vivo relevance of these activities is unclear. It can also hydrolyze a broad variety of dietary glycosides including phytoestrogens, flavonols, flavones, flavanones and cyanogens in vitro and could therefore play a role in the metabolism of xenobiotics. Possesses transxylosylase activity in vitro using xylosylated ceramides/XylCers (such as beta-D-xylosyl-(1&lt;-&gt;1')-N-acylsphing-4-enine) as xylosyl donors and cholesterol as acceptor. Could also play a role in the catabolism of cytosolic sialyl free N-glycans. The chain is Cytosolic beta-glucosidase from Homo sapiens (Human).